The chain runs to 128 residues: Large ribosomal subunit protein bL17 (128 aa).

The protein belongs to the bacterial ribosomal protein bL17 family. Part of the 50S ribosomal subunit. Contacts protein L32.

This chain is Large ribosomal subunit protein bL17, found in Enterobacter sp. (strain 638).